Here is a 300-residue protein sequence, read N- to C-terminus: Ankyrin repeat domain-containing protein 54 (300 aa).

The interval 1–27 (MAAAAGDADDEPRSGHSSSEGECAVAP) is disordered. Ala-2 is subject to N-acetylalanine. A phosphoserine mark is found at Ser-58 and Ser-63. The Nuclear localization signal (NLS) motif lies at 99 to 117 (RRLGPTGKEVHALKRLRDS). ANK repeat units lie at residues 109–138 (HALK…DPCA), 142–171 (KGRT…DPNQ), 175–204 (LGNT…RVDA), and 208–244 (AGRT…IIHM). The LYN-binding stretch occupies residues 141-241 (DKGRTALHFA…EAVRLEVKQI (101 aa)). The Nuclear export signal (NES) motif lies at 283 to 293 (LLASFTSLSLQ).

As to quaternary structure, interacts (via ankyrin repeat region) with LYN (via SH3-domain) in an activation-independent status of LYN. Forms a multiprotein complex with LYN and HCLS1. Interacts with TSN2, VAV1, DBNL and LASP1.

It localises to the nucleus. Its subcellular location is the cytoplasm. It is found in the midbody. Its function is as follows. Plays an important role in regulating intracellular signaling events associated with erythroid terminal differentiation. The sequence is that of Ankyrin repeat domain-containing protein 54 (ANKRD54) from Homo sapiens (Human).